Here is a 37-residue protein sequence, read N- to C-terminus: MKVRASVKKICVKCKIVKRKGIVRVICETPKHSQRQG.

This sequence belongs to the bacterial ribosomal protein bL36 family.

The polypeptide is Large ribosomal subunit protein bL36 (Geobacter sp. (strain M21)).